Consider the following 408-residue polypeptide: Phosphopentomutase (408 aa).

Residues D10, D303, H308, D344, H345, and H356 each coordinate Mn(2+).

The protein belongs to the phosphopentomutase family. Requires Mn(2+) as cofactor.

It is found in the cytoplasm. The catalysed reaction is 2-deoxy-alpha-D-ribose 1-phosphate = 2-deoxy-D-ribose 5-phosphate. It catalyses the reaction alpha-D-ribose 1-phosphate = D-ribose 5-phosphate. The protein operates within carbohydrate degradation; 2-deoxy-D-ribose 1-phosphate degradation; D-glyceraldehyde 3-phosphate and acetaldehyde from 2-deoxy-alpha-D-ribose 1-phosphate: step 1/2. Functionally, isomerase that catalyzes the conversion of deoxy-ribose 1-phosphate (dRib-1-P) and ribose 1-phosphate (Rib-1-P) to deoxy-ribose 5-phosphate (dRib-5-P) and ribose 5-phosphate (Rib-5-P), respectively. In Tolumonas auensis (strain DSM 9187 / NBRC 110442 / TA 4), this protein is Phosphopentomutase.